The primary structure comprises 539 residues: Aluminum-activated malate transporter 13 (539 aa).

6 consecutive transmembrane segments (helical) span residues 57-77, 80-100, 107-127, 130-150, 165-185, and 192-212; these read VGVALTLVSLLYLMEPFFEGV, NALWAVMTVVVVLEFSAGATL, GLGTLIAGSLAFFIEWVAIHS, ILGGIFIGTSVFTIGSMITYM, LVFLLTFNLITVSSYRVDTVI, and LYTIGMGIGICLFMSLLFFPI.

Belongs to the aromatic acid exporter (TC 2.A.85) family.

The protein resides in the membrane. Functionally, malate transporter. This chain is Aluminum-activated malate transporter 13 (ALMT13), found in Arabidopsis thaliana (Mouse-ear cress).